Consider the following 301-residue polypeptide: Chitin deacetylase 1 (301 aa).

The first 24 residues, Met-1–Ala-24, serve as a signal peptide directing secretion. Residues Asn-26, Asn-50, and Asn-68 are each glycosylated (N-linked (GlcNAc...) asparagine). A disulfide bridge connects residues Cys-107 and Cys-290. Residues Phe-108 to Ala-288 form the NodB homology domain. Asp-115 acts as the Proton acceptor in catalysis. Asp-115 contributes to the acetate binding site. Co(2+) is bound by residues Asp-116, His-162, and His-166. An N-linked (GlcNAc...) asparagine glycan is attached at Asn-189. Tyr-203 contacts acetate. His-263 functions as the Proton donor in the catalytic mechanism.

This sequence belongs to the polysaccharide deacetylase family. Co(2+) serves as cofactor.

The protein resides in the prospore. The enzyme catalyses [(1-&gt;4)-N-acetyl-beta-D-glucosaminyl](n) + n H2O = chitosan + n acetate. Its function is as follows. Hydrolyzes the N-acetamido groups of N-acetyl-D-glucosamine residues in chitin to form chitosan and acetate. Chitosan is a component of the spore wall. The protein is Chitin deacetylase 1 of Saccharomyces cerevisiae (strain ATCC 204508 / S288c) (Baker's yeast).